Here is a 181-residue protein sequence, read N- to C-terminus: Transcription termination/antitermination protein NusG (181 aa).

A KOW domain is found at 130–161 (PGEMIRVNDGPFADFNGVVEEVDYEKSRLKVS).

It belongs to the NusG family. Monomer. Interacts with the transcription termination factor Rho and with RNA polymerase.

Participates in transcription elongation, termination and antitermination. In the absence of Rho, increases the rate of transcription elongation by the RNA polymerase (RNAP), probably by partially suppressing pausing. In the presence of Rho, modulates most Rho-dependent termination events by interacting with the RNAP to render the complex more susceptible to the termination activity of Rho. May be required to overcome a kinetic limitation of Rho to function at certain terminators. Also involved in ribosomal RNA transcriptional antitermination. In Buchnera aphidicola subsp. Acyrthosiphon pisum (strain APS) (Acyrthosiphon pisum symbiotic bacterium), this protein is Transcription termination/antitermination protein NusG.